Reading from the N-terminus, the 232-residue chain is Octanoyltransferase (232 aa).

The BPL/LPL catalytic domain occupies 43 to 231 (DQTPNYFLFV…HFTQLFDCTV (189 aa)). Residues 88-95 (RGGDITYH), 160-162 (ALG), and 173-175 (GFA) each bind substrate. C191 functions as the Acyl-thioester intermediate in the catalytic mechanism.

This sequence belongs to the LipB family.

The protein resides in the cytoplasm. It carries out the reaction octanoyl-[ACP] + L-lysyl-[protein] = N(6)-octanoyl-L-lysyl-[protein] + holo-[ACP] + H(+). It participates in protein modification; protein lipoylation via endogenous pathway; protein N(6)-(lipoyl)lysine from octanoyl-[acyl-carrier-protein]: step 1/2. Catalyzes the transfer of endogenously produced octanoic acid from octanoyl-acyl-carrier-protein onto the lipoyl domains of lipoate-dependent enzymes. Lipoyl-ACP can also act as a substrate although octanoyl-ACP is likely to be the physiological substrate. The protein is Octanoyltransferase of Flavobacterium psychrophilum (strain ATCC 49511 / DSM 21280 / CIP 103535 / JIP02/86).